A 360-amino-acid polypeptide reads, in one-letter code: DNA replication and repair protein RecF (360 aa).

30 to 37 (GRNAQGKT) is a binding site for ATP.

The protein belongs to the RecF family.

The protein resides in the cytoplasm. Functionally, the RecF protein is involved in DNA metabolism; it is required for DNA replication and normal SOS inducibility. RecF binds preferentially to single-stranded, linear DNA. It also seems to bind ATP. The protein is DNA replication and repair protein RecF of Desulforudis audaxviator (strain MP104C).